The following is a 551-amino-acid chain: Arginine--tRNA ligase (551 aa).

Residues 123–133 (ANPTGPLTIGR) carry the 'HIGH' region motif.

Belongs to the class-I aminoacyl-tRNA synthetase family. In terms of assembly, monomer.

It is found in the cytoplasm. It catalyses the reaction tRNA(Arg) + L-arginine + ATP = L-arginyl-tRNA(Arg) + AMP + diphosphate. In Prosthecochloris aestuarii (strain DSM 271 / SK 413), this protein is Arginine--tRNA ligase.